The primary structure comprises 640 residues: MTEFSKTPLLDTIRTPDDLRKLRIDQVQQVADELRLETIDAVSVTGGHFGAGLGVVELTTAIHYVFDTPRDRLIWDVGHQAYPHKILTGRRDRIRTLRTGGGLSGFTKRTESDHDPFGAGHSSTSISAGLGMAVASDLAGTKNNVIAVIGDGSISAGMAYEAMNNAGAMNSRLIVILNDNNMSIAPPVGAMSAYLSRLYSGKTYRSLREAGKQIGKHLPKLIADRAARAEEYSRGFMMGGGTLFEELGFYYVGPIDGHNLDHLLPILQNVRDADAGPFLIHVVTQKGKGYAPAEAAADKYHAVVKFDIATGTQAKTKSNAPSYQNVFGASLVKEAQKDDKIVGITAAMPSGTGIDIFEKAFPKRTFDVGIAEQHAVTFAAGLATEGFKPFCAIYSTFLQRGYDQIVHDVAIQNLPVRFAIDRAGLVGADGATHAGSFDNAYLGCLPNFVIMAASDEAELVHMVATQVAINDAPSAVRYPRGEGRGVEMPEVGIPLEIGKGRVVRQGNKIALLSFGTRLAECEKAADELATLGLSTTVADARFMKPLDVELVLKLAREHEVLITVEEGSIGGFGSHVMQTLAEHGMLDGEVRMRSLVLPDEFMDHDTPAVMYARAGLDAKGIVKKVFEALGKDKAETVKLA.

Residues H79 and 120 to 122 contribute to the thiamine diphosphate site; that span reads GHS. D151 provides a ligand contact to Mg(2+). Thiamine diphosphate is bound by residues 152–153, N180, Y290, and E372; that span reads GS. Position 180 (N180) interacts with Mg(2+).

Belongs to the transketolase family. DXPS subfamily. As to quaternary structure, homodimer. Mg(2+) is required as a cofactor. The cofactor is thiamine diphosphate.

The catalysed reaction is D-glyceraldehyde 3-phosphate + pyruvate + H(+) = 1-deoxy-D-xylulose 5-phosphate + CO2. It participates in metabolic intermediate biosynthesis; 1-deoxy-D-xylulose 5-phosphate biosynthesis; 1-deoxy-D-xylulose 5-phosphate from D-glyceraldehyde 3-phosphate and pyruvate: step 1/1. Its function is as follows. Catalyzes the acyloin condensation reaction between C atoms 2 and 3 of pyruvate and glyceraldehyde 3-phosphate to yield 1-deoxy-D-xylulose-5-phosphate (DXP). The polypeptide is 1-deoxy-D-xylulose-5-phosphate synthase (Rhodopseudomonas palustris (strain BisA53)).